The sequence spans 302 residues: Deoxyhypusine hydroxylase (302 aa).

Methionine 1 bears the N-acetylmethionine mark. HEAT-like PBS-type repeat units lie at residues 54-80 (LKHE…VLQD), 87-113 (VRHE…YSTD), 175-201 (ERYR…GLKC), 206-232 (FRHE…TLAR), and 239-265 (VRHE…YITD). Histidine 56, histidine 89, and glutamate 90 together coordinate Fe cation. Fe cation is bound by residues histidine 208, histidine 241, and glutamate 242.

It belongs to the deoxyhypusine hydroxylase family. It depends on Fe(2+) as a cofactor.

The enzyme catalyses [eIF5A protein]-deoxyhypusine + AH2 + O2 = [eIF5A protein]-hypusine + A + H2O. It functions in the pathway protein modification; eIF5A hypusination. Functionally, catalyzes the hydroxylation of the N(6)-(4-aminobutyl)-L-lysine intermediate produced by deoxyhypusine synthase/DHPS on a critical lysine of the eukaryotic translation initiation factor 5A/eIF-5A. This is the second step of the post-translational modification of that lysine into an unusual amino acid residue named hypusine. Hypusination is unique to mature eIF-5A factor and is essential for its function. This Rattus norvegicus (Rat) protein is Deoxyhypusine hydroxylase (Dohh).